Reading from the N-terminus, the 95-residue chain is Large ribosomal subunit protein uL23 (95 aa).

It belongs to the universal ribosomal protein uL23 family. In terms of assembly, part of the 50S ribosomal subunit. Contacts protein L29.

Functionally, binds to 23S rRNA. One of the proteins that surrounds the polypeptide exit tunnel on the outside of the ribosome. The chain is Large ribosomal subunit protein uL23 from Methanopyrus kandleri (strain AV19 / DSM 6324 / JCM 9639 / NBRC 100938).